We begin with the raw amino-acid sequence, 294 residues long: Elongation factor Ts (294 aa).

The involved in Mg(2+) ion dislocation from EF-Tu stretch occupies residues 78–81 (TDFV).

The protein belongs to the EF-Ts family.

Its subcellular location is the cytoplasm. Functionally, associates with the EF-Tu.GDP complex and induces the exchange of GDP to GTP. It remains bound to the aminoacyl-tRNA.EF-Tu.GTP complex up to the GTP hydrolysis stage on the ribosome. The sequence is that of Elongation factor Ts from Mycoplasma mobile (strain ATCC 43663 / 163K / NCTC 11711) (Mesomycoplasma mobile).